A 788-amino-acid polypeptide reads, in one-letter code: Leucine-rich repeat and fibronectin type-III domain-containing protein 2 (788 aa).

The signal sequence occupies residues 1-20 (METLLGGLLAFGMAFAVVDA). Residues 21 to 52 (CPKYCVCQNLSESLGTLCPSKGLLFVPPDIDR) form the LRRNT domain. At 21-534 (CPKYCVCQNL…MHSQILGGTM (514 aa)) the chain is on the extracellular side. Asn-29 is a glycosylation site (N-linked (GlcNAc...) asparagine). LRR repeat units follow at residues 53 to 74 (RTVE…DFAN), 77 to 98 (GLVD…SFLD), 101 to 122 (SLRS…TLRG), 125 to 146 (NLQH…AFED), 150 to 171 (TLED…SVRR), 174 to 195 (NLHQ…TFAD), and 198 to 219 (KLAR…PIFA). One can recognise an LRRCT domain in the interval 242 to 288 (NPLHCNCELLWLRRLERDDDLETCGSPGSLKGRYFWHIREEEFVCEP). Residues 289-375 (PLITQHTHKL…GEATATVEVS (87 aa)) form the Ig-like domain. The cysteines at positions 310 and 359 are disulfide-linked. Residues Asn-332, Asn-341, and Asn-384 are each glycosylated (N-linked (GlcNAc...) asparagine). The disordered stretch occupies residues 383–423 (SNSTSRMAPPKSRLSDITGSSKTSRGGGGSGAGEPPKSTPE). In terms of domain architecture, Fibronectin type-III spans 422–518 (PERAVLVSDV…GCAQFFTKAD (97 aa)). Residues 535–555 (ILVIGGIIVATLLVFIVILMV) form a helical membrane-spanning segment. Over 556 to 788 (RYKVCNHDTP…SSEWVMESTV (233 aa)) the chain is Cytoplasmic. A compositionally biased stretch (low complexity) spans 620-631 (CDSSSSSSLGSG). Disordered stretches follow at residues 620–655 (CDSS…PSLD) and 668–711 (SQRK…RSLL). A compositionally biased stretch (pro residues) spans 642–651 (RLPPPAPRPK). Residues 785–788 (ESTV) carry the PDZ-binding motif.

The protein belongs to the LRFN family. Forms heteromeric complexes with LRFN1, LRFN3, LRFN4 and LRFN5. Can form homomeric complexes, but not across cell junctions. Interacts with DLG4. Directly interacts with DLG1, DLG2 and DLG3. Directly interacts with 2 NMDA receptor subunits GRIN1 and GRIN2A. Post-translationally, glycosylated. Predominantly expressed in the brain, with a weak, but broad expression in the cerebral cortex and diencephalic nuclei. Strongly expressed in both the pyramidal layer and the dentate gyrus of the hippocampus. Also detected in other parts of the central nervous system, including the olfactory bulb, pons, cerebellum, and medulla oblongata, as well as in the peripheral nervous system, such as the ganglia of cranial nerves and the dorsal root ganglion during gestation.

The protein resides in the membrane. It is found in the synapse. It localises to the postsynaptic cell membrane. In terms of biological role, promotes neurite outgrowth in hippocampal neurons. Enhances the cell surface expression of 2 NMDA receptor subunits GRIN1 and GRIN2A. May play a role in redistributing DLG4 to the cell periphery. This chain is Leucine-rich repeat and fibronectin type-III domain-containing protein 2 (Lrfn2), found in Mus musculus (Mouse).